A 542-amino-acid chain; its full sequence is Nuclear speckle splicing regulatory protein 1 (542 aa).

The interval 21–53 (RVLQKPSVFGSDSDDDETSVSESLQREAAKKQA) is disordered. A phosphoserine mark is found at serine 27, serine 31, and serine 33. The stretch at 103–172 (IHNLLKAVEI…RAAALEAHLD (70 aa)) forms a coiled coil. The tract at residues 105 to 169 (NLLKAVEIRK…REKRAAALEA (65 aa)) is necessary for alternative splicing activity. Positions 190–516 (AVGEEAAPKS…FAKRSNEETV (327 aa)) are disordered. Glycyl lysine isopeptide (Lys-Gly) (interchain with G-Cter in SUMO2) cross-links involve residues lysine 198 and lysine 209. Residues 200–217 (SFREARTVIKEEKLRGYP) show a composition bias toward basic and acidic residues. Positions 223 to 232 (ESRPPQQSCV) are enriched in polar residues. The segment covering 239–256 (EAEENPDADREFDDESSE) has biased composition (acidic residues). A phosphoserine mark is found at serine 254 and serine 255. The segment covering 257 to 271 (DGEKRDHKVKSRGED) has biased composition (basic and acidic residues). Lysine 277 carries the post-translational modification N6-acetyllysine. Over residues 277-288 (KHPKHHKNRAHS) the composition is skewed to basic residues. Lysine 280 participates in a covalent cross-link: Glycyl lysine isopeptide (Lys-Gly) (interchain with G-Cter in SUMO2). Composition is skewed to basic and acidic residues over residues 309–335 (RGHE…EEKS), 343–475 (SHKD…KPSH), and 485–501 (RLAE…ERPP). Residues 372–413 (KREKYSSREQERDRQRNDHDRYSEKEKKRKEKEEHTKARRER) adopt a coiled-coil conformation. Serine 443 carries the post-translational modification Phosphoserine.

It belongs to the NSRP1 family. Interacts (via C-terminus) with SRSF1. Interacts (via C-terminus) with SRSF2.

It localises to the nucleus. Its subcellular location is the nucleus speckle. Functionally, RNA-binding protein that mediates pre-mRNA alternative splicing regulation. The protein is Nuclear speckle splicing regulatory protein 1 (Nsrp1) of Mus musculus (Mouse).